The chain runs to 316 residues: METWQELKVTVKREGEELVSNLLIELGAQGVAIEDSMDYVGNVDRFGEIFPEVEQQEEIVVTAYYPDTVDVTVVEADLQARISELTDFMDLGELKIGTTALAEEDWADNWKKYYEPARITHDLTIVPSWTDYEATAGEKIIKLDPGMAFGTGTHPTTKMSIFALEQVLRGGETVLDVGTGSGVLSIASSLLGAKEIFAYDLDDVAVRVAQENIELNPGMENIHVAAGDLLKGVEIEADVIVANILADILIHLTEDAYRLVKDEGYLIMSGIIKDKWDMVRELAESAGFFLETHMVQGEWNACVFKKTKDISGVIGG.

4 residues coordinate S-adenosyl-L-methionine: threonine 157, glycine 178, aspartate 200, and asparagine 243.

This sequence belongs to the methyltransferase superfamily. PrmA family.

Its subcellular location is the cytoplasm. It carries out the reaction L-lysyl-[protein] + 3 S-adenosyl-L-methionine = N(6),N(6),N(6)-trimethyl-L-lysyl-[protein] + 3 S-adenosyl-L-homocysteine + 3 H(+). Its function is as follows. Methylates ribosomal protein L11. The polypeptide is Ribosomal protein L11 methyltransferase (Streptococcus pneumoniae (strain P1031)).